Consider the following 263-residue polypeptide: Regulatory protein RecX (263 aa).

Belongs to the RecX family.

The protein localises to the cytoplasm. Modulates RecA activity. The protein is Regulatory protein RecX of Bacillus licheniformis (strain ATCC 14580 / DSM 13 / JCM 2505 / CCUG 7422 / NBRC 12200 / NCIMB 9375 / NCTC 10341 / NRRL NRS-1264 / Gibson 46).